The primary structure comprises 198 residues: NAD(P)H dehydrogenase (quinone) (198 aa).

The Flavodoxin-like domain maps to 4-189 (VLVLYYSMYG…SIARYQGEYV (186 aa)). FMN contacts are provided by residues 10–15 (SMYGHI) and 78–80 (TRF). Tyrosine 12 contacts NAD(+). Residue tryptophan 98 participates in substrate binding. Residues 113–118 (STGTGG) and histidine 133 each bind FMN.

This sequence belongs to the WrbA family. FMN is required as a cofactor.

The enzyme catalyses a quinone + NADH + H(+) = a quinol + NAD(+). It catalyses the reaction a quinone + NADPH + H(+) = a quinol + NADP(+). The sequence is that of NAD(P)H dehydrogenase (quinone) from Escherichia coli O157:H7.